Consider the following 97-residue polypeptide: Citrate lyase acyl carrier protein (97 aa).

Position 14 is an O-(phosphoribosyl dephospho-coenzyme A)serine (Ser-14).

The protein belongs to the CitD family. In terms of assembly, oligomer with a subunit composition of (alpha,beta,gamma)6.

It is found in the cytoplasm. Covalent carrier of the coenzyme of citrate lyase. This is Citrate lyase acyl carrier protein from Enterobacter sp. (strain 638).